Here is a 615-residue protein sequence, read N- to C-terminus: Chaperone protein DnaK (615 aa).

Thr-177 carries the post-translational modification Phosphothreonine; by autocatalysis. Residues 567–615 (TKESQGIAMKAYQKAQEKQAQEKGTQENTTAKNEKPQDEVVDADFEEKK) form a disordered region. The segment covering 581-591 (AQEKQAQEKGT) has biased composition (basic and acidic residues). The segment covering 605–615 (EVVDADFEEKK) has biased composition (acidic residues).

Belongs to the heat shock protein 70 family.

Functionally, acts as a chaperone. The chain is Chaperone protein DnaK from Onion yellows phytoplasma (strain OY-M).